Consider the following 494-residue polypeptide: Solute carrier family 2, facilitated glucose transporter member 3 (494 aa).

The Cytoplasmic segment spans residues 1 to 10 (MGTTKVTTPL). The helical transmembrane segment at 11–32 (IFAISIATIGSFQFGYNTGVIN) threads the bilayer. Residues 33 to 64 (APEAIIKDFLNYTLEERSETPPSSVLLTSLWS) lie on the Extracellular side of the membrane. N43 carries N-linked (GlcNAc...) asparagine glycosylation. A helical membrane pass occupies residues 65–85 (LSVAIFSVGGMIGSFSVGLFV). Residues 86 to 90 (NRFGR) are Cytoplasmic-facing. A helical membrane pass occupies residues 91-111 (RNSMLIVNLLAIAGGCLMGFC). The Extracellular segment spans residues 112-118 (KIAESVE). A helical membrane pass occupies residues 119-142 (MLILGRLIIGLFCGLCTGFVPMYI). Residues 143-153 (GEISPTALRGA) are Cytoplasmic-facing. A helical transmembrane segment spans residues 154–174 (FGTLNQLGIVIGILVAQIFGL). Residue Q159 coordinates D-glucose. Residues 175-183 (KVILGTEDL) are Extracellular-facing. A helical transmembrane segment spans residues 184 to 204 (WPLLLGFTILPAIIQCAALPF). Topologically, residues 205-269 (CPESPRFLLI…LFRAPNYRQP (65 aa)) are cytoplasmic. At T232 the chain carries Phosphothreonine. A helical transmembrane segment spans residues 270-290 (IIISIMLQLSQQLSGINAVFY). The segment at 277 to 279 (QLS) is important for selectivity against fructose. D-glucose-binding positions include 280-281 (QQ) and N286. Residues 291–304 (YSTGIFKDAGVQEP) are Extracellular-facing. Residues 305 to 325 (VYATIGAGVVNTIFTVVSVFL) traverse the membrane as a helical segment. N315 is a D-glucose binding site. Residues 326 to 331 (VERAGR) are Cytoplasmic-facing. Residues 332–352 (RTLHLIGLGGMAFCSILMTIS) form a helical membrane-spanning segment. Residues 353 to 363 (LLLKDNYSWMS) are Extracellular-facing. Residues 364–389 (FICIGAILVFVAFFEIGPGPIPWFIV) traverse the membrane as a helical segment. E378 and W386 together coordinate D-glucose. The Cytoplasmic portion of the chain corresponds to 390–399 (AELFGQGPRP). Residues 400-420 (AAMAVAGCSNWTSNFLVGLLF) traverse the membrane as a helical segment. The Extracellular segment spans residues 421-429 (PSATFYLGA). The chain crosses the membrane as a helical span at residues 430-450 (YVFIVFTVFLVIFWVFTFFKV). The Cytoplasmic segment spans residues 451-494 (PETRGRTFEEITRAFEGQVQTGTRGEKGPIMEMNSIQPTKDTNA). Residues 473 to 494 (TRGEKGPIMEMNSIQPTKDTNA) are disordered. The span at 484–494 (NSIQPTKDTNA) shows a compositional bias: polar residues. At S485 the chain carries Phosphoserine. T492 carries the post-translational modification Phosphothreonine.

This sequence belongs to the major facilitator superfamily. Sugar transporter (TC 2.A.1.1) family. Glucose transporter subfamily. In terms of assembly, interacts with SMIM43; the interaction may promote SLC2A3-mediated glucose transport to meet the energy needs of mesendoderm differentiation. As to expression, detected in placenta.

Its subcellular location is the cell membrane. The protein resides in the perikaryon. It localises to the cell projection. It catalyses the reaction D-glucose(out) = D-glucose(in). It carries out the reaction D-galactose(in) = D-galactose(out). Its activity is regulated as follows. Deoxyglucose transport is inhibited by D-glucose, D-galactose and maltose. Galactose transport is inhibited by D-glucose and maltose. In terms of biological role, facilitative glucose transporter. Can also mediate the uptake of various other monosaccharides across the cell membrane. Mediates the uptake of glucose, 2-deoxyglucose, galactose, mannose, xylose and fucose, and probably also dehydroascorbate. Does not mediate fructose transport. Required for mesendoderm differentiation. The chain is Solute carrier family 2, facilitated glucose transporter member 3 from Ovis aries (Sheep).